Here is a 391-residue protein sequence, read N- to C-terminus: Succinate--CoA ligase [ADP-forming] subunit beta (391 aa).

In terms of domain architecture, ATP-grasp spans 9 to 246 (KHLFTEAGIA…LTQEDETEVR (238 aa)). ATP is bound by residues K46, 53–55 (GRG), E99, L102, and E107. 2 residues coordinate Mg(2+): N199 and D213. Substrate is bound by residues N266 and 323–325 (GIV).

It belongs to the succinate/malate CoA ligase beta subunit family. In terms of assembly, heterotetramer of two alpha and two beta subunits. Mg(2+) serves as cofactor.

It carries out the reaction succinate + ATP + CoA = succinyl-CoA + ADP + phosphate. It catalyses the reaction GTP + succinate + CoA = succinyl-CoA + GDP + phosphate. It participates in carbohydrate metabolism; tricarboxylic acid cycle; succinate from succinyl-CoA (ligase route): step 1/1. Functionally, succinyl-CoA synthetase functions in the citric acid cycle (TCA), coupling the hydrolysis of succinyl-CoA to the synthesis of either ATP or GTP and thus represents the only step of substrate-level phosphorylation in the TCA. The beta subunit provides nucleotide specificity of the enzyme and binds the substrate succinate, while the binding sites for coenzyme A and phosphate are found in the alpha subunit. The sequence is that of Succinate--CoA ligase [ADP-forming] subunit beta from Halorhodospira halophila (strain DSM 244 / SL1) (Ectothiorhodospira halophila (strain DSM 244 / SL1)).